A 133-amino-acid chain; its full sequence is Agouti-signaling protein (133 aa).

A signal peptide spans 1 to 22; it reads MDVIHLFLATLLVSLCFLTAYS. Residues 26 to 36 show a composition bias toward basic and acidic residues; the sequence is PEEKPKDDRSL. The tract at residues 26–83 is disordered; the sequence is PEEKPKDDRSLRNNSSMNLLDSPSVSIMALNKKSKKISRKEAEKKKRSSKKKASMTKV. A compositionally biased stretch (polar residues) spans 37-50; sequence RNNSSMNLLDSPSV. N-linked (GlcNAc...) asparagine glycosylation is found at Asn38 and Asn39. Positions 70 to 79 are enriched in basic residues; sequence KKRSSKKKAS. Cystine bridges form between Cys94–Cys109, Cys101–Cys115, Cys108–Cys126, Cys112–Cys133, and Cys117–Cys124. Positions 94 to 133 constitute an Agouti domain; the sequence is CVATRDSCKPPAPACCDPCASCQCRFFRSACSCRVLTRTC.

The protein resides in the secreted. In terms of biological role, involved in the regulation of melanogenesis. The binding of ASP to MC1R precludes alpha-MSH initiated signaling and thus blocks production of cAMP, leading to a down-regulation of eumelanogenesis (brown/black pigment) and thus increasing synthesis of pheomelanin (yellow/red pigment). The protein is Agouti-signaling protein (ASIP) of Equus caballus (Horse).